We begin with the raw amino-acid sequence, 2134 residues long: MSKLFSTVGRTVDEVLSVLNDEDTESYAGPDRTAVVGGGFLTTVDQSSVSTATMGSLQDVQYRTAVDIPGSRVTQGERFFLIDQREWNSTQSEWQLLGKIDIVKELLDQSYAVDGLLKYHSYARFGLDVIVQINPTSFQAGGLIAALVPYDQVDIESIVAMTTYCHGKVNCNINYVVRMKVPYIYSRGCYNLRNSAYSIWMLVIRVWSRLQLGSGTSTQITITTLARFVDLELHGLSPLVAQMMRNEFRLSSSSNIVNLANYDDARAKVSLALGQEEFSRDSSSTGGELVHHFSQWTSIPCLAFTFTFPGTVGPGTHIWSTTVDPFSCNLRASSTVHPTNLSSIAGMFCFWRGDIVFEFQVFCTKYHSGRLMFVYVPGDENTKISTLTAKQASTGLTAVFDINGVNSTLVFRCPFISDTPYRVNPTTHKSLWPYATGKLVCYVYNILNAPASVSPSVSINVYKSAADLELYAPVYGVSPTNTSIFAQGKEDEGGFFSVPEVEQHVVEDKEPQGPLHVTPFGAVKAMEDPQLARKTPGTFPELAPGKPRHTVDHMDLYKFMGRAHYLWGHEFTKTDMQYTFQIPLSPIKEGFVTGTLRWFLSLFQLYRGSLDITMTFAGKTNVDGIVYFVPEGVAIETEREEQTPLLTLNYKTSVGAIRFNTGQTTNVQFRIPFYTPLEHIATHSKNAMDSVLGAITTQITNYSAQDEYLQVTYYISFNEDSQFSVPRAVPVVSSFTDTSSKTVMNTYWLDDDELVEESSHSSFDEIEEAQCSKCKMDLGDIVICSGEKAKHFGVYVGDGVVHVDPEGNATNWFMKRKATVKKSKNLDKWCFALSPRIDRTLICETANLMVGREVEYDIFVKNCETYARGIASGDYGTKEGEKWKTLLSAVGVAAMTTTMMAMRHQLLDTSLTKLPQKVGEVTNEVRKILEDTSAGVREFKEKVSSILRKTWPGKTSIKIMKWTFRIVKMCVGVGLCYAHGWDSKPVTAVVTMFSMDFLDLVIDGIEIGRMIIHELTTPKAQGLSEINQVLSIAKNAKDVIKMLIEIFCKVIERITGEHGKKIQWAQDKKEEIMNVLERAEKWITTSDDHSEGIECLKLVRSIQSVIRGEESLKELAGELRAVGTHVLNKLGRLDKPNAPILVRAEPTVLYLYGNRGGGKSLASMAIAVKLCKELGISHVEGIYTKPIMSDFWDGYAGQPVVIMDDLGQSTSDEDWTNFCQLVSSCPLRLNMANLEKKGTQFNSPFIIASSNLSHPCPKTVYCTDAIARRLHIKVKVSPKEEFSTHAMLDVAKAKKAGAYCNLDCLDFQKISDLASTPVSVQDIVLALLHTNVDKQTVMGNIIQYWAQSNPREVFDTMAEGKNSGKYLWLFEKIKTSKWYILGCVGAALSVSVLGVFAYHMIKNHFRDQQHDQSAYSAAIKPLRVVRLEQSDAQSVVDISNVVHGNLVRVGVGPNEARIHWLNNGWGVYNTYILMPYHGIKDADVDDDLYIERAGTIYSTNMKMVQVLFLESREGDLVLINVPRLPKFRDIRNHFSTEENIRRAEGMPGTLCTLDHERFTLVTESDLKMVEAATYVCEDDKGVRTDISVGRSWKAKACTVAGMCGGALVTSNNKMQNAIVGIHVAGGAPAISRVITKEMIEEMLKTRAQCSRIWKTEFVEKKISVGSKTKYHKSPLYDFCPQKVIKCPTKLFYQGEIDVMQVMLAKYSSPIVSEPLGYATVVEAYTNRMVSFFSEPRQLTYDECINGIEGLDAIDLKTSAGFPYNTLSLKKSDLIINGKKAQRLQQDVEKMEEDLHMNRSIQVVFTTCAKDELRPLSKGMLGKTRAIKACPVSFTILFRKYLGYALAQIQSHPGFHTGIAVGVDPDQDWHCMWYSIVTQCDLVVGLDFSNYDASLSPFMIYHAGRVLGQICGLDPRLVDRIMEPIVNSVHQLGSMRYYVDGSMPSGTPATSVLNSIINVVNISHVLCALEKISVFEVFKLSKILTYGDDVLFCIKKESLDQKSFPLSSFVQGLKELGMSPTGADKMEVKVTPVHKMSFLKRTFYVDEWSICHPRISEETVYSMLAWKSDNASMKHVIETSIWFMFHHGPRKYVIFCTCLRGVLCRVGIGLYIPTYKELEVRYDRLVKDRVIDDSF.

The Cytoplasmic portion of the chain corresponds to 1 to 1377 (MSKLFSTVGR…WLFEKIKTSK (1377 aa)). The 102-residue stretch at 781 to 882 (IVICSGEKAK…GDYGTKEGEK (102 aa)) folds into the LRAT domain. Residues histidine 791 and histidine 802 contribute to the active site. The Acyl-thioester intermediate role is filled by cysteine 863. Residues 1127–1289 (LNKLGRLDKP…EEFSTHAMLD (163 aa)) enclose the SF3 helicase domain. 1153–1160 (GNRGGGKS) serves as a coordination point for ATP. The stretch at 1378-1392 (WYILGCVGAALSVSV) is an intramembrane region. Topologically, residues 1393 to 2134 (LGVFAYHMIK…VKDRVIDDSF (742 aa)) are cytoplasmic. Tyrosine 1415 bears the O-(5'-phospho-RNA)-tyrosine mark. The region spanning 1431–1643 (DAQSVVDISN…ITKEMIEEML (213 aa)) is the Peptidase C3 domain. Catalysis depends on for protease 3C activity residues histidine 1477, aspartate 1515, and cysteine 1603. Residues 1880–2001 (DLVVGLDFSN…CIKKESLDQK (122 aa)) enclose the RdRp catalytic domain.

The protein belongs to the picornaviridae polyprotein family. Post-translationally, specific enzymatic cleavages by the viral protease in vivo yield a variety of precursors and mature proteins. During virion maturation, non-infectious particles are rendered infectious following cleavage of VP0. This maturation cleavage is followed by a conformational change of the particle. VPg is uridylylated by the polymerase and is covalently linked to the 5'-end of genomic RNA. This uridylylated form acts as a nucleotide-peptide primer for the polymerase.

It localises to the virion. It is found in the host cytoplasm. Its subcellular location is the host cytoplasmic vesicle membrane. It carries out the reaction RNA(n) + a ribonucleoside 5'-triphosphate = RNA(n+1) + diphosphate. It catalyses the reaction a ribonucleoside 5'-triphosphate + H2O = a ribonucleoside 5'-diphosphate + phosphate + H(+). The enzyme catalyses Selective cleavage of Gln-|-Gly bond in the poliovirus polyprotein. In other picornavirus reactions Glu may be substituted for Gln, and Ser or Thr for Gly.. Capsid proteins VP1, VP2, and VP3 form a closed capsid enclosing the viral positive strand RNA genome. All these proteins contain a beta-sheet structure called beta-barrel jelly roll. Together they form an icosahedral capsid (T=3) composed of 60 copies of each VP1, VP2, and VP3, with a diameter of approximately 300 Angstroms. VP1 is situated at the 12 fivefold axes, whereas VP2 and VP3 are located at the quasi-sixfold axes. Functionally, VP0 precursor is a component of immature procapsids. The N-terminal domain of VP0, protein VP4, is needed for the assembly of 12 pentamers into the icosahedral structure. Unlike other picornaviruses, AEV VP4 may not be myristoylated. Its function is as follows. Protein 2B and 2BC precursor affect membrane integrity and cause an increase in membrane permeability. In terms of biological role, associates with and induces structural rearrangements of intracellular membranes. It displays RNA-binding, nucleotide binding and NTPase activities. Protein 3A, via its hydrophobic domain, serves as membrane anchor. Functionally, protein 3B is covalently linked to the 5'-end of both the positive-strand and negative-strand genomic RNAs. It acts as a genome-linked replication primer. Its function is as follows. Cysteine protease that generates mature viral proteins from the precursor polyprotein. In addition to its proteolytic activity, it binds to viral RNA, and thus influences viral genome replication. RNA and substrate bind cooperatively to the protease. In terms of biological role, RNA-directed RNA polymerase 3D-POL replicates genomic and antigenomic RNA by recognizing replications specific signals. The polypeptide is Genome polyprotein (Avian encephalomyelitis virus (strain L2Z) (AEV)).